The chain runs to 697 residues: MARQHKLEDYRNIGIMAHIDAGKTTTTERILLHTGKIHKIGETHDGASQMDWMAQEQERGITITSAATTAFWKGKRINIIDTPGHVDFTVEVERSLRVLDGAVTVLDAQSGVEPQTETVWRQATTYRVPRLIYVNKMDKAGADFFASVKSVKTRLNANAVAIQIPIGQESDFKGIVDLVEMKAYEYDGKPEENAKEIEIPFDLQALAKEKRQELIEAVATYDEEFMMKVLDGVEPTLDELKAMIRKATLTSEFFPAVCGTSFKNKGVKKMIDAVVDYLPSPLDIPAAKAHKGENEEVDVPATDDYPFTGLAFKVMTDPFVGSLTFIRLYAGTLQKGSYVYNSTKGTKERIGRLILMHANSRSEIDEANAGDIVAAVGLKGTTTGDTLIAEKAPEIVLERMVFPEPVISQALEPESKDAMEKLALGLQKLAAEDPTFRTYTDEETGQTIIAGMGELHLDIIVDRLKREHGVKAKVGAPQVSYRETITKSADVEGKHIKQSGGKGQYGHVWIKFEPNPDKGFEFVDKIVGGKIPKEYIKPIQKGLEDKMASGILAGYPMIDIKATLFDGSYHDVDSSELAYKIAASKALTKAKDLVGTVLLEPIMDVSVIIPDDYYGDVMGDITRRRGQIQESELRNDGDHILRCLTPLSEMFGYATDLRSMTAGRGNYQMQFHHYEKCPKNIADEIIKKRNIQLKDED.

The tr-type G domain maps to 8–282 (EDYRNIGIMA…AVVDYLPSPL (275 aa)). Residues 17–24 (AHIDAGKT), 81–85 (DTPGH), and 135–138 (NKMD) contribute to the GTP site.

Belongs to the TRAFAC class translation factor GTPase superfamily. Classic translation factor GTPase family. EF-G/EF-2 subfamily.

The protein localises to the cytoplasm. Its function is as follows. Catalyzes the GTP-dependent ribosomal translocation step during translation elongation. During this step, the ribosome changes from the pre-translocational (PRE) to the post-translocational (POST) state as the newly formed A-site-bound peptidyl-tRNA and P-site-bound deacylated tRNA move to the P and E sites, respectively. Catalyzes the coordinated movement of the two tRNA molecules, the mRNA and conformational changes in the ribosome. The protein is Elongation factor G of Mycoplasmopsis agalactiae (strain NCTC 10123 / CIP 59.7 / PG2) (Mycoplasma agalactiae).